A 416-amino-acid chain; its full sequence is MMTRMELRPLEIGFSKALTEVAPVTCQCECWDHNLCSSQASEMDLIYQSQDTHSCASKQDAVFQLLSETKIPVPNRYRKISHRLSTLSNKKTLKSQLDRFLSSSKKLHNDDVNRGDYCFLLSTPVECSASTNSHSYDCLWNFSCNSFPEYSSYSASETSSVASYSYYSGPNPATPSSSSCNLVNANSLDIYLNINNLKKSKSVPRLRGQFMEPVEHNHPLSKSLEEQSSFLEQSKDASSNLTACNRSGSSLSSNFYSSRLSKKTSLASLNKSRASLQHKIMSLSRNIIRRVFHKPEVHLDPSASILNLSSSHGESNLTNGLLCQNFKLFQDDWLMEDCAPDANFTLYTPLQPWEKRSVKPEIRRPRLNPNFFRVFVLEAQMRRAGKLSANTAGRAQLIYLPKPAVTFSTSPLHVEL.

The protein resides in the cytoplasm. In terms of biological role, may have a role in meiosis and sporulation. The sequence is that of Meiotically up-regulated protein PB1A10.08 from Schizosaccharomyces pombe (strain 972 / ATCC 24843) (Fission yeast).